The sequence spans 216 residues: MSALGQITITVSRCWNTERNQTDKNPCLHGAYLQLRETVKNKSTHLKKPLMKQAPPWKDHLTFQPLHPAERKTQVWRWQSGNSSDLETTSSASPWPTGSNRDVVLNTLAESCCGLSELITAPPYAGVSIQGFSQIWVLFPFCGGTFHHNEKDVLGLQDFERESVSTSQSRNISLLTLGQLQNCVIGKLTIIDLLTEHLLGVRHGVICFPWGLPSSS.

In terms of tissue distribution, isoform 4 is expressed in placenta, lung, kidney and pancreas.

In terms of biological role, may play a role in uric acid excretion. This chain is Talanin (ZNF365), found in Homo sapiens (Human).